A 287-amino-acid chain; its full sequence is MNLRDKLDVYLRLSRMDRPIGTLLLMWPCLMALWFAAGGMPDIKVLVIFVIGVVVMRACGCVINDYADRNLDAHVERTQSRPLASGEISSKEALIVFLVMALFAFCLVLLLNPLVVKLSVVGIILTIIYPFTKRYTNMPQMFLGTVWSWSIPMAYAAQTGTVPAEAWWLFAANWCWTVAYDTMYAMVDRDDDLKVGIKSTAILFGKYDRQIIAAFQFAALACFIIAGLIAERGVIYGGGILAFIGFALYQQKLIFGRERAPCFKAFLNNNWAGMALFIALGLDYLVF.

5 helical membrane-spanning segments follow: residues 20–38 (IGTL…FAAG), 95–115 (IVFL…NPLV), 211–231 (IIAA…LIAE), 235–255 (IYGG…KLIF), and 266–286 (FLNN…DYLV).

This sequence belongs to the UbiA prenyltransferase family. It depends on Mg(2+) as a cofactor.

The protein localises to the cell inner membrane. The catalysed reaction is all-trans-octaprenyl diphosphate + 4-hydroxybenzoate = 4-hydroxy-3-(all-trans-octaprenyl)benzoate + diphosphate. It participates in cofactor biosynthesis; ubiquinone biosynthesis. Its function is as follows. Catalyzes the prenylation of para-hydroxybenzoate (PHB) with an all-trans polyprenyl group. Mediates the second step in the final reaction sequence of ubiquinone-8 (UQ-8) biosynthesis, which is the condensation of the polyisoprenoid side chain with PHB, generating the first membrane-bound Q intermediate 3-octaprenyl-4-hydroxybenzoate. This chain is 4-hydroxybenzoate octaprenyltransferase, found in Shewanella piezotolerans (strain WP3 / JCM 13877).